The sequence spans 209 residues: Uracil phosphoribosyltransferase (209 aa).

Residues Arg79, Arg104, and 131-139 contribute to the 5-phospho-alpha-D-ribose 1-diphosphate site; that span reads DPMLATGGS. Uracil-binding positions include Ile194 and 199 to 201; that span reads GDA. Asp200 lines the 5-phospho-alpha-D-ribose 1-diphosphate pocket.

It belongs to the UPRTase family. It depends on Mg(2+) as a cofactor.

It catalyses the reaction UMP + diphosphate = 5-phospho-alpha-D-ribose 1-diphosphate + uracil. The protein operates within pyrimidine metabolism; UMP biosynthesis via salvage pathway; UMP from uracil: step 1/1. Its activity is regulated as follows. Allosterically activated by GTP. Catalyzes the conversion of uracil and 5-phospho-alpha-D-ribose 1-diphosphate (PRPP) to UMP and diphosphate. This chain is Uracil phosphoribosyltransferase, found in Halalkalibacterium halodurans (strain ATCC BAA-125 / DSM 18197 / FERM 7344 / JCM 9153 / C-125) (Bacillus halodurans).